The sequence spans 573 residues: Putative inorganic phosphate transporter C1683.01 (573 aa).

Helical transmembrane passes span 48–68 (MMLAGVGFFLDSYDLFIINLV), 100–120 (AASNIGNIFGQLMFGFMGDFF), 124–144 (FVYGKEMIIVIIATILLIAMP), 154–174 (MMWVFCWRWLLGVGIGGDYPM), 194–214 (LIFAFQGFGTLAGAIVTIILL), and 230–250 (LEGVWRLQFGLALVPAIGVLI). Polar residues predominate over residues 261 to 270 (FKNSQQLNSG). 2 disordered regions span residues 261 to 280 (FKNSQQLNSGDNRDPKTSLN) and 290 to 312 (PSVTKGHPEIHESSENYLSRSNT). The next 6 helical transmembrane spans lie at 348 to 368 (HLLGTSVCWFLLDIAFYGVNL), 397 to 417 (LIIAVAGYVPGYWFNVFLVEI), 422 to 442 (WIQLQGFVITGLMFAILAGRW), 451 to 471 (FACFVIAQLFSNFGPNSTTFI), 487 to 507 (GISAALGKCGAILASLLFNFL), and 510 to 530 (IIGYGNVMWIFCGCMWGGILF).

It belongs to the major facilitator superfamily. Sugar transporter (TC 2.A.1.1) family.

The protein resides in the endoplasmic reticulum membrane. High-affinity transporter for external inorganic phosphate. The protein is Putative inorganic phosphate transporter C1683.01 of Schizosaccharomyces pombe (strain 972 / ATCC 24843) (Fission yeast).